Consider the following 84-residue polypeptide: Small ribosomal subunit protein bS16 (84 aa).

The protein belongs to the bacterial ribosomal protein bS16 family.

The protein is Small ribosomal subunit protein bS16 of Ralstonia pickettii (strain 12J).